Here is a 293-residue protein sequence, read N- to C-terminus: Homoserine kinase (293 aa).

Proline 84–serine 94 provides a ligand contact to ATP.

The protein belongs to the GHMP kinase family. Homoserine kinase subfamily.

Its subcellular location is the cytoplasm. The catalysed reaction is L-homoserine + ATP = O-phospho-L-homoserine + ADP + H(+). The protein operates within amino-acid biosynthesis; L-threonine biosynthesis; L-threonine from L-aspartate: step 4/5. Its function is as follows. Catalyzes the ATP-dependent phosphorylation of L-homoserine to L-homoserine phosphate. The protein is Homoserine kinase of Campylobacter fetus subsp. fetus (strain 82-40).